A 285-amino-acid chain; its full sequence is RNA polymerase sigma factor RpoH (285 aa).

The segment at 53 to 122 (LILSHLRFVA…IHEYVLRNWR (70 aa)) is sigma-70 factor domain-2. The short motif at 77–80 (DLIQ) is the Interaction with polymerase core subunit RpoC element. A sigma-70 factor domain-4 region spans residues 229–281 (ALEGLDERSQHIIRARWLDDDNKSTLQELADQYGVSAERVRQLEKNAMKKLKM). Residues 254 to 273 (LQELADQYGVSAERVRQLEK) constitute a DNA-binding region (H-T-H motif).

This sequence belongs to the sigma-70 factor family. RpoH subfamily. Interacts with the RNA polymerase core enzyme.

Its subcellular location is the cytoplasm. Its function is as follows. Sigma factors are initiation factors that promote the attachment of RNA polymerase to specific initiation sites and are then released. This sigma factor is involved in regulation of expression of heat shock genes. In Serratia marcescens, this protein is RNA polymerase sigma factor RpoH.